Consider the following 270-residue polypeptide: 4-hydroxy-tetrahydrodipicolinate reductase (270 aa).

Residues 8-13, Asp-34, 102-104, and 128-131 contribute to the NAD(+) site; these read GALGRM, GTT, and SQNY. His-160 functions as the Proton donor/acceptor in the catalytic mechanism. His-161 is a binding site for (S)-2,3,4,5-tetrahydrodipicolinate. Lys-164 functions as the Proton donor in the catalytic mechanism. (S)-2,3,4,5-tetrahydrodipicolinate is bound at residue 170–171; that stretch reads GT.

This sequence belongs to the DapB family.

Its subcellular location is the cytoplasm. The enzyme catalyses (S)-2,3,4,5-tetrahydrodipicolinate + NAD(+) + H2O = (2S,4S)-4-hydroxy-2,3,4,5-tetrahydrodipicolinate + NADH + H(+). It catalyses the reaction (S)-2,3,4,5-tetrahydrodipicolinate + NADP(+) + H2O = (2S,4S)-4-hydroxy-2,3,4,5-tetrahydrodipicolinate + NADPH + H(+). It participates in amino-acid biosynthesis; L-lysine biosynthesis via DAP pathway; (S)-tetrahydrodipicolinate from L-aspartate: step 4/4. In terms of biological role, catalyzes the conversion of 4-hydroxy-tetrahydrodipicolinate (HTPA) to tetrahydrodipicolinate. This Methanococcus vannielii (strain ATCC 35089 / DSM 1224 / JCM 13029 / OCM 148 / SB) protein is 4-hydroxy-tetrahydrodipicolinate reductase.